The primary structure comprises 213 residues: Imidazoleglycerol-phosphate dehydratase (213 aa).

Belongs to the imidazoleglycerol-phosphate dehydratase family.

Its subcellular location is the cytoplasm. The enzyme catalyses D-erythro-1-(imidazol-4-yl)glycerol 3-phosphate = 3-(imidazol-4-yl)-2-oxopropyl phosphate + H2O. Its pathway is amino-acid biosynthesis; L-histidine biosynthesis; L-histidine from 5-phospho-alpha-D-ribose 1-diphosphate: step 6/9. The polypeptide is Imidazoleglycerol-phosphate dehydratase (Trichodesmium erythraeum (strain IMS101)).